We begin with the raw amino-acid sequence, 441 residues long: MRLSQYFLPLLKENPKEAEIVSHRFMLRAGMIRQQTSGIYSWLPLGKKVLDKVCKIIREEQERAGAIEILMPTIQSADLWRESGRYDDYGLEMLRIKDRQKRDLLYGPTNEEMVTDIFRSYVRSYKDLPLNLYHIQWKFRDEIRPRFGVMRAREFLMKDAYSFDLDYEGSKTSYNRMFVAYLRTFSRLGLKAIPMRADTGPIGGKLSHEFIILAETGESAIFCDKQFLELSVPNSSIDFSDKAVLDDTVKQWTSFYAATEEMHNEEEWARLSEENRLSARGIEVGHIFHFGTKYSAPMEAKVMGQDGKEHVVSMGSYGIGPSRLVAAAIEASHDEKGIIWPKSMAPFDFGIINMKPDDEKCTQACEFLYQGLKDAGFDPFLDDRNERPGSKFATMDLIGLPTQIIVGPNSIAHNEVEIKDRKTGAKKSLKVEDVLSQLSIL.

This sequence belongs to the class-II aminoacyl-tRNA synthetase family. ProS type 2 subfamily. In terms of assembly, homodimer.

It is found in the cytoplasm. It catalyses the reaction tRNA(Pro) + L-proline + ATP = L-prolyl-tRNA(Pro) + AMP + diphosphate. Its function is as follows. Catalyzes the attachment of proline to tRNA(Pro) in a two-step reaction: proline is first activated by ATP to form Pro-AMP and then transferred to the acceptor end of tRNA(Pro). The polypeptide is Proline--tRNA ligase (Bartonella tribocorum (strain CIP 105476 / IBS 506)).